Here is a 122-residue protein sequence, read N- to C-terminus: Large ribosomal subunit protein uL14c (122 aa).

Belongs to the universal ribosomal protein uL14 family. As to quaternary structure, part of the 50S ribosomal subunit.

It is found in the plastid. The protein localises to the chloroplast. Functionally, binds to 23S rRNA. The chain is Large ribosomal subunit protein uL14c from Coffea arabica (Arabian coffee).